Reading from the N-terminus, the 306-residue chain is Putative S-adenosyl-L-methionine-dependent methyltransferase Mvan_1345 (306 aa).

S-adenosyl-L-methionine is bound by residues Asp134 and 163–164; that span reads DL.

It belongs to the UPF0677 family.

Its function is as follows. Exhibits S-adenosyl-L-methionine-dependent methyltransferase activity. The protein is Putative S-adenosyl-L-methionine-dependent methyltransferase Mvan_1345 of Mycolicibacterium vanbaalenii (strain DSM 7251 / JCM 13017 / BCRC 16820 / KCTC 9966 / NRRL B-24157 / PYR-1) (Mycobacterium vanbaalenii).